The following is a 1006-amino-acid chain: DNA polymerase (1006 aa).

This sequence belongs to the DNA polymerase type-B family. Interacts with OPG148/A20. Component of the Uracil-DNA glycosylase(UDG)-OPG148/A20-polymerase complex; OPG148/A20 and OPG116/UDG form a heterodimeric processivity factor that associates with OPG071/E9 to form the processive polymerase holoenzyme.

The enzyme catalyses DNA(n) + a 2'-deoxyribonucleoside 5'-triphosphate = DNA(n+1) + diphosphate. Functionally, catalyzes DNA synthesis. Acquires processivity by associating with a heterodimeric processivity factor comprised of the viral OPG148/A20 and OPG116/D4 proteins, thereby forming the DNA polymerase holoenzyme. Displays 3'- to 5' exonuclease activity. Might participate in viral DNA recombination. Does not perform OPG116/D4synthesis across an abasic site. This Bos taurus (Bovine) protein is DNA polymerase (OPG071).